A 320-amino-acid chain; its full sequence is UDP-3-O-acyl-N-acetylglucosamine deacetylase (320 aa).

Residues histidine 92, histidine 251, and aspartate 255 each contribute to the Zn(2+) site. Histidine 278 functions as the Proton donor in the catalytic mechanism.

The protein belongs to the LpxC family. Requires Zn(2+) as cofactor.

The catalysed reaction is a UDP-3-O-[(3R)-3-hydroxyacyl]-N-acetyl-alpha-D-glucosamine + H2O = a UDP-3-O-[(3R)-3-hydroxyacyl]-alpha-D-glucosamine + acetate. It functions in the pathway glycolipid biosynthesis; lipid IV(A) biosynthesis; lipid IV(A) from (3R)-3-hydroxytetradecanoyl-[acyl-carrier-protein] and UDP-N-acetyl-alpha-D-glucosamine: step 2/6. Its function is as follows. Catalyzes the hydrolysis of UDP-3-O-myristoyl-N-acetylglucosamine to form UDP-3-O-myristoylglucosamine and acetate, the committed step in lipid A biosynthesis. This is UDP-3-O-acyl-N-acetylglucosamine deacetylase from Psychrobacter arcticus (strain DSM 17307 / VKM B-2377 / 273-4).